Here is a 109-residue protein sequence, read N- to C-terminus: Nucleoid-associated protein HS_1309 (109 aa).

This sequence belongs to the YbaB/EbfC family. Homodimer.

It is found in the cytoplasm. The protein localises to the nucleoid. In terms of biological role, binds to DNA and alters its conformation. May be involved in regulation of gene expression, nucleoid organization and DNA protection. The chain is Nucleoid-associated protein HS_1309 from Histophilus somni (strain 129Pt) (Haemophilus somnus).